The sequence spans 370 residues: MSNQHILLMSNLLPVGSNISTWWNFGSMLLTCLLLQIMTGFFLAIHYTANINLAFSSVVHILRDVPYGWIMQNIHAIGASLFFICIYIHIARGLYYGLYLNKEVWLSGTALLITLMATAFFGYVLPWGQMSFLAATVITNLLTAIPYLGNTLTIWLWGGFSINDPTLTRFFALHFILPFAIISLSSIHIILLHNEGSNNPLGTNSDIDKIPLHPYHSYKDMLMITIMITMLFITMSFTPNLLNDPENFSKANPLLTPQHIKPEWYFLFAYGILRSIPNKLGGTMALIMSVAILITVPFTHTSHTRSMLFRPLTQILFWTLISTFIIITWTATKPVESPFISISQMTSIIYFSFFIINPLLGWIENKIMMP.

4 helical membrane-spanning segments follow: residues 25-45 (FGSM…FLAI), 69-90 (WIMQ…YIHI), 105-125 (WLSG…GYVL), and 170-190 (FFAL…IHII). Positions 75 and 89 each coordinate heme b. Residues histidine 174 and histidine 188 each coordinate heme b. Histidine 193 contacts a ubiquinone. A run of 4 helical transmembrane segments spans residues 218–238 (YKDM…MSFT), 280–300 (LGGT…PFTH), 312–332 (LTQI…WTAT), and 339–358 (FISI…IINP).

The protein belongs to the cytochrome b family. In terms of assembly, the cytochrome bc1 complex contains 3 respiratory subunits (MT-CYB, CYC1 and UQCRFS1), 2 core proteins (UQCRC1 and UQCRC2) and probably 6 low-molecular weight proteins. Requires heme b as cofactor.

The protein resides in the mitochondrion inner membrane. In terms of biological role, component of the ubiquinol-cytochrome c reductase complex (complex III or cytochrome b-c1 complex) that is part of the mitochondrial respiratory chain. The b-c1 complex mediates electron transfer from ubiquinol to cytochrome c. Contributes to the generation of a proton gradient across the mitochondrial membrane that is then used for ATP synthesis. This is Cytochrome b (MT-CYB) from Bungarus fasciatus (Banded krait).